Here is a 1083-residue protein sequence, read N- to C-terminus: Carbamoyl phosphate synthase large chain (1083 aa).

The interval 1–402 is carboxyphosphate synthetic domain; sequence MPKRTDIRKV…AYMKALRSME (402 aa). The ATP site is built by Arg-129, Arg-169, Gly-175, Gly-176, Glu-208, Val-210, Glu-215, Gly-241, Val-242, His-243, Gln-285, and Glu-299. The ATP-grasp 1 domain maps to 133 to 328; sequence KAAMQKIGVA…IAKIAAKLAL (196 aa). Positions 285, 299, and 301 each coordinate Mg(2+). Mn(2+) is bound by residues Gln-285, Glu-299, and Asn-301. The tract at residues 403–554 is oligomerization domain; it reads LGRVGLESPE…YSTYEEEDEA (152 aa). Residues 555-937 form a carbamoyl phosphate synthetic domain region; that stretch reads PPTDRQKVLI…AFAKSQLAAG (383 aa). An ATP-grasp 2 domain is found at 679–871; sequence AALIEKLGLK…MAKIAALCMV (193 aa). Residues Arg-715, Arg-754, Leu-756, Glu-761, Gly-787, Val-788, His-789, Ser-790, Gln-830, and Glu-842 each coordinate ATP. The Mg(2+) site is built by Gln-830, Glu-842, and Asn-844. 3 residues coordinate Mn(2+): Gln-830, Glu-842, and Asn-844. The region spanning 938–1078 is the MGS-like domain; the sequence is VKLPKSGKVF…QEYLGINAAP (141 aa). The segment at 938–1083 is allosteric domain; it reads VKLPKSGKVF…INAAPPGTRR (146 aa).

This sequence belongs to the CarB family. As to quaternary structure, composed of two chains; the small (or glutamine) chain promotes the hydrolysis of glutamine to ammonia, which is used by the large (or ammonia) chain to synthesize carbamoyl phosphate. Tetramer of heterodimers (alpha,beta)4. The cofactor is Mg(2+). Mn(2+) serves as cofactor.

It catalyses the reaction hydrogencarbonate + L-glutamine + 2 ATP + H2O = carbamoyl phosphate + L-glutamate + 2 ADP + phosphate + 2 H(+). The enzyme catalyses hydrogencarbonate + NH4(+) + 2 ATP = carbamoyl phosphate + 2 ADP + phosphate + 2 H(+). It participates in amino-acid biosynthesis; L-arginine biosynthesis; carbamoyl phosphate from bicarbonate: step 1/1. It functions in the pathway pyrimidine metabolism; UMP biosynthesis via de novo pathway; (S)-dihydroorotate from bicarbonate: step 1/3. Its function is as follows. Large subunit of the glutamine-dependent carbamoyl phosphate synthetase (CPSase). CPSase catalyzes the formation of carbamoyl phosphate from the ammonia moiety of glutamine, carbonate, and phosphate donated by ATP, constituting the first step of 2 biosynthetic pathways, one leading to arginine and/or urea and the other to pyrimidine nucleotides. The large subunit (synthetase) binds the substrates ammonia (free or transferred from glutamine from the small subunit), hydrogencarbonate and ATP and carries out an ATP-coupled ligase reaction, activating hydrogencarbonate by forming carboxy phosphate which reacts with ammonia to form carbamoyl phosphate. The protein is Carbamoyl phosphate synthase large chain of Myxococcus xanthus (strain DK1622).